The following is a 101-amino-acid chain: MAKLALIEREKKRARLAAKYAPKRAELKAIIGDMSKSDEEHYAARLELQQLPRNSNPTRKRNRCAITGRPRGTFRKFGLARNKIREIAFRGEIPGLTKASW.

This sequence belongs to the universal ribosomal protein uS14 family. Part of the 30S ribosomal subunit. Contacts proteins S3 and S10.

Binds 16S rRNA, required for the assembly of 30S particles and may also be responsible for determining the conformation of the 16S rRNA at the A site. The protein is Small ribosomal subunit protein uS14 of Paraburkholderia phytofirmans (strain DSM 17436 / LMG 22146 / PsJN) (Burkholderia phytofirmans).